The primary structure comprises 248 residues: tRNA pseudouridine synthase A (248 aa).

The Nucleophile role is filled by Asp-53. Tyr-111 is a binding site for substrate.

It belongs to the tRNA pseudouridine synthase TruA family. As to quaternary structure, homodimer.

The catalysed reaction is uridine(38/39/40) in tRNA = pseudouridine(38/39/40) in tRNA. Formation of pseudouridine at positions 38, 39 and 40 in the anticodon stem and loop of transfer RNAs. This is tRNA pseudouridine synthase A from Listeria innocua serovar 6a (strain ATCC BAA-680 / CLIP 11262).